The primary structure comprises 158 residues: Transcription elongation factor GreA (158 aa).

Residues 48–75 (NSEYDSAKEDQAFVEGRIAQLEKMIRNA) are a coiled coil.

This sequence belongs to the GreA/GreB family.

Its function is as follows. Necessary for efficient RNA polymerase transcription elongation past template-encoded arresting sites. The arresting sites in DNA have the property of trapping a certain fraction of elongating RNA polymerases that pass through, resulting in locked ternary complexes. Cleavage of the nascent transcript by cleavage factors such as GreA or GreB allows the resumption of elongation from the new 3'terminus. GreA releases sequences of 2 to 3 nucleotides. This Shouchella clausii (strain KSM-K16) (Alkalihalobacillus clausii) protein is Transcription elongation factor GreA.